The chain runs to 300 residues: 33 kDa chaperonin (300 aa).

Disulfide bonds link Cys-235/Cys-237 and Cys-269/Cys-272.

This sequence belongs to the HSP33 family. Under oxidizing conditions two disulfide bonds are formed involving the reactive cysteines. Under reducing conditions zinc is bound to the reactive cysteines and the protein is inactive.

The protein localises to the cytoplasm. In terms of biological role, redox regulated molecular chaperone. Protects both thermally unfolding and oxidatively damaged proteins from irreversible aggregation. Plays an important role in the bacterial defense system toward oxidative stress. The protein is 33 kDa chaperonin of Pseudomonas fluorescens (strain ATCC BAA-477 / NRRL B-23932 / Pf-5).